The chain runs to 209 residues: Urease accessory protein UreG (209 aa).

Residue G18–T25 coordinates GTP.

It belongs to the SIMIBI class G3E GTPase family. UreG subfamily. In terms of assembly, homodimer. UreD, UreF and UreG form a complex that acts as a GTP-hydrolysis-dependent molecular chaperone, activating the urease apoprotein by helping to assemble the nickel containing metallocenter of UreC. The UreE protein probably delivers the nickel.

Its subcellular location is the cytoplasm. Facilitates the functional incorporation of the urease nickel metallocenter. This process requires GTP hydrolysis, probably effectuated by UreG. The sequence is that of Urease accessory protein UreG from Cupriavidus pinatubonensis (strain JMP 134 / LMG 1197) (Cupriavidus necator (strain JMP 134)).